The following is a 346-amino-acid chain: Flap endonuclease 1 (346 aa).

The N-domain stretch occupies residues 1–102; it reads MGVTELGKLI…AEIEERRKAK (102 aa). Positions 31, 84, 156, 158, 177, 179, and 239 each coordinate Mg(2+). An I-domain region spans residues 120–261; the sequence is EVAKYAKRAI…RALKLIWEFG (142 aa).

Belongs to the XPG/RAD2 endonuclease family. FEN1 subfamily. Interacts with PCNA. PCNA stimulates the nuclease activity without altering cleavage specificity. Mg(2+) serves as cofactor.

Structure-specific nuclease with 5'-flap endonuclease and 5'-3' exonuclease activities involved in DNA replication and repair. During DNA replication, cleaves the 5'-overhanging flap structure that is generated by displacement synthesis when DNA polymerase encounters the 5'-end of a downstream Okazaki fragment. Binds the unpaired 3'-DNA end and kinks the DNA to facilitate 5' cleavage specificity. Cleaves one nucleotide into the double-stranded DNA from the junction in flap DNA, leaving a nick for ligation. Also involved in the base excision repair (BER) pathway. Acts as a genome stabilization factor that prevents flaps from equilibrating into structures that lead to duplications and deletions. Also possesses 5'-3' exonuclease activity on nicked or gapped double-stranded DNA. This Pyrobaculum arsenaticum (strain DSM 13514 / JCM 11321 / PZ6) protein is Flap endonuclease 1.